Reading from the N-terminus, the 259-residue chain is Adenosylcobinamide-GDP ribazoletransferase (259 aa).

A run of 6 helical transmembrane segments spans residues 37–57 (ASRYFGLVGTLIGVLSALVYS), 58–78 (VMLHWVSPSIAIIFAMIASVL), 118–138 (ALALVLCLLLKWQLLSELALF), 143–163 (VSLALILGHTLSRVVAASFIF), 195–215 (AAISLLLISFMQALVLILGLL), and 237–257 (LGATQQIAEVVCYLLLLIVGA).

Belongs to the CobS family. Mg(2+) serves as cofactor.

It is found in the cell inner membrane. It catalyses the reaction alpha-ribazole + adenosylcob(III)inamide-GDP = adenosylcob(III)alamin + GMP + H(+). The enzyme catalyses alpha-ribazole 5'-phosphate + adenosylcob(III)inamide-GDP = adenosylcob(III)alamin 5'-phosphate + GMP + H(+). It functions in the pathway cofactor biosynthesis; adenosylcobalamin biosynthesis; adenosylcobalamin from cob(II)yrinate a,c-diamide: step 7/7. Functionally, joins adenosylcobinamide-GDP and alpha-ribazole to generate adenosylcobalamin (Ado-cobalamin). Also synthesizes adenosylcobalamin 5'-phosphate from adenosylcobinamide-GDP and alpha-ribazole 5'-phosphate. The chain is Adenosylcobinamide-GDP ribazoletransferase from Shewanella piezotolerans (strain WP3 / JCM 13877).